A 267-amino-acid polypeptide reads, in one-letter code: Phosphate import ATP-binding protein PstB (267 aa).

The region spanning 21–262 (VAARNLDFYY…PSKQQTEDYI (242 aa)) is the ABC transporter domain. 53–60 (GPSGCGKS) is a binding site for ATP.

It belongs to the ABC transporter superfamily. Phosphate importer (TC 3.A.1.7) family. As to quaternary structure, the complex is composed of two ATP-binding proteins (PstB), two transmembrane proteins (PstC and PstA) and a solute-binding protein (PstS).

It is found in the cell inner membrane. The catalysed reaction is phosphate(out) + ATP + H2O = ADP + 2 phosphate(in) + H(+). Functionally, part of the ABC transporter complex PstSACB involved in phosphate import. Responsible for energy coupling to the transport system. In Xanthomonas campestris pv. campestris (strain 8004), this protein is Phosphate import ATP-binding protein PstB.